Consider the following 127-residue polypeptide: Small ribosomal subunit protein bS6 (127 aa).

The tract at residues I102–A127 is disordered. A compositionally biased stretch (basic and acidic residues) spans E107 to A119.

The protein belongs to the bacterial ribosomal protein bS6 family.

Binds together with bS18 to 16S ribosomal RNA. The chain is Small ribosomal subunit protein bS6 from Coxiella burnetii (strain CbuK_Q154) (Coxiella burnetii (strain Q154)).